The following is a 270-amino-acid chain: MEIVHAIGGGQGDPLVIAGKAYTSRLLVGTGKYKDLAETRAAVEMAGAEIVTVAIRRTNIGQDPGQPSLLDVIPPDRYTILPNTAGCYTVEDAVRTCRLARELLGGHRLVKLEVLGDPTTLFPDVTATLEAAEILVRDGFDVMVYTNDDPIIAKRLEEIGCVAVMPLAAPIGSGLGIRNPYNILTIVENAKVPVLVDAGVGTASDAAVAMELGCDGVLMNTAIAEAKNPVLMASAMKKAIEAGREAFLAGRMPRRRFASASSPLAGLFFD.

Lys-111 acts as the Schiff-base intermediate with DXP in catalysis. Residues Gly-172, 198–199 (AG), and 220–221 (NT) contribute to the 1-deoxy-D-xylulose 5-phosphate site.

Belongs to the ThiG family. In terms of assembly, homotetramer. Forms heterodimers with either ThiH or ThiS.

The protein localises to the cytoplasm. It carries out the reaction [ThiS sulfur-carrier protein]-C-terminal-Gly-aminoethanethioate + 2-iminoacetate + 1-deoxy-D-xylulose 5-phosphate = [ThiS sulfur-carrier protein]-C-terminal Gly-Gly + 2-[(2R,5Z)-2-carboxy-4-methylthiazol-5(2H)-ylidene]ethyl phosphate + 2 H2O + H(+). The protein operates within cofactor biosynthesis; thiamine diphosphate biosynthesis. In terms of biological role, catalyzes the rearrangement of 1-deoxy-D-xylulose 5-phosphate (DXP) to produce the thiazole phosphate moiety of thiamine. Sulfur is provided by the thiocarboxylate moiety of the carrier protein ThiS. In vitro, sulfur can be provided by H(2)S. This is Thiazole synthase from Methylococcus capsulatus (strain ATCC 33009 / NCIMB 11132 / Bath).